Here is a 228-residue protein sequence, read N- to C-terminus: L-ribulose-5-phosphate 4-epimerase UlaF (228 aa).

Residues 26-27 (GN), 43-44 (SG), and 72-73 (SS) each bind substrate. Residues Asp74, His93, and His95 each contribute to the Zn(2+) site. Asp118 serves as the catalytic Proton donor/acceptor. His167 is a Zn(2+) binding site. Tyr225 acts as the Proton donor/acceptor in catalysis.

It belongs to the aldolase class II family. AraD/FucA subfamily. It depends on Zn(2+) as a cofactor.

It carries out the reaction L-ribulose 5-phosphate = D-xylulose 5-phosphate. It participates in cofactor degradation; L-ascorbate degradation; D-xylulose 5-phosphate from L-ascorbate: step 4/4. Functionally, catalyzes the isomerization of L-ribulose 5-phosphate to D-xylulose 5-phosphate. Is involved in the anaerobic L-ascorbate utilization. This Salmonella choleraesuis (strain SC-B67) protein is L-ribulose-5-phosphate 4-epimerase UlaF.